A 432-amino-acid chain; its full sequence is Adenylosuccinate synthetase (432 aa).

GTP contacts are provided by residues 12–18 and 40–42; these read GDEGKGK and GHT. Asp13 serves as the catalytic Proton acceptor. Positions 13 and 40 each coordinate Mg(2+). Residues 13 to 16, 38 to 41, Thr132, Arg146, Gln226, Thr241, and Arg305 contribute to the IMP site; these read DEGK and NAGH. His41 serves as the catalytic Proton donor. 301–307 is a substrate binding site; the sequence is TVTGRKR. GTP is bound by residues Arg307, 333 to 335, and 415 to 417; these read KLD and STS.

It belongs to the adenylosuccinate synthetase family. In terms of assembly, homodimer. It depends on Mg(2+) as a cofactor.

It is found in the cytoplasm. It catalyses the reaction IMP + L-aspartate + GTP = N(6)-(1,2-dicarboxyethyl)-AMP + GDP + phosphate + 2 H(+). Its pathway is purine metabolism; AMP biosynthesis via de novo pathway; AMP from IMP: step 1/2. Plays an important role in the de novo pathway of purine nucleotide biosynthesis. Catalyzes the first committed step in the biosynthesis of AMP from IMP. This is Adenylosuccinate synthetase from Allorhizobium ampelinum (strain ATCC BAA-846 / DSM 112012 / S4) (Agrobacterium vitis (strain S4)).